A 308-amino-acid chain; its full sequence is Ribosome maturation factor RimP (308 aa).

Disordered regions lie at residues 1–31 (MARAGESGRAGVRRSTAPSRRTGGARAAADA), 94–113 (EDIGTDGAGGTGGSGGAAGG), and 249–308 (DLDE…EMNR). Positions 17–31 (APSRRTGGARAAADA) are enriched in low complexity. Over residues 99–113 (DGAGGTGGSGGAAGG) the composition is skewed to gly residues. Over residues 249–269 (DLDEGLEDDDGLEDEDDEDEY) the composition is skewed to acidic residues.

The protein belongs to the RimP family.

It is found in the cytoplasm. In terms of biological role, required for maturation of 30S ribosomal subunits. This is Ribosome maturation factor RimP from Parafrankia sp. (strain EAN1pec).